The chain runs to 254 residues: Protein CbbY, plasmid (254 aa).

This sequence belongs to the HAD-like hydrolase superfamily. CbbY/CbbZ/Gph/YieH family.

The sequence is that of Protein CbbY, plasmid (cbbYP) from Cupriavidus necator (strain ATCC 17699 / DSM 428 / KCTC 22496 / NCIMB 10442 / H16 / Stanier 337) (Ralstonia eutropha).